A 359-amino-acid polypeptide reads, in one-letter code: Type-1 angiotensin II receptor (359 aa).

The Extracellular portion of the chain corresponds to 1–25 (MALNSSADDGIKRIQDDCPKAGRHS). An N-linked (GlcNAc...) asparagine glycan is attached at N4. Angiotensin II is bound by residues Q15 and D17. 2 disulfide bridges follow: C18-C274 and C101-C180. The helical transmembrane segment at 26–55 (YIFVMIPTLYSIIFVVGIFGNSLVVIVIYF) threads the bilayer. Residues 56–61 (YMKLKT) lie on the Cytoplasmic side of the membrane. A helical membrane pass occupies residues 62–89 (VASVFLLNLALADLCFLLTLPVWAVYTA). Over 90-98 (MEYRWPFGN) the chain is Extracellular. A helical transmembrane segment spans residues 99 to 125 (HLCKIASAGISFNLYASVFLLTCLSID). The Cytoplasmic portion of the chain corresponds to 126-141 (RYLAIVHPMKSRLRRT). Residues 142–165 (MLVAKVTCVVIWLLAGLASLPAVI) traverse the membrane as a helical segment. The Extracellular segment spans residues 166-190 (HRNVYFIENTNSTVCAFHYESQNST). R167 contacts angiotensin II. A glycan (N-linked (GlcNAc...) asparagine) is linked at N176. F182, H183, and Y184 together coordinate angiotensin II. N-linked (GlcNAc...) asparagine glycosylation is present at N188. A helical membrane pass occupies residues 191–216 (LPVGLGLTKNILGFMFPFLIILTSYT). K199 contacts angiotensin II. Residues 217–239 (LIWKALKKAYEIQKNKPRNDDIF) are Cytoplasmic-facing. A helical transmembrane segment spans residues 240–268 (RIIMAIVLFFFFSWIPHQIFTFLDVLIQL). At 269 to 278 (GVIRDCKIAD) the chain is on the extracellular side. A helical transmembrane segment spans residues 279–304 (VVDTAMPITICIAYFNNCLNPLFYGF). Over 305 to 359 (LGKKFKKYFLQLLKYIPPKAKSHSSLSTKMSTLSYRPSDNMNSSAKKPASCFEVE) the chain is Cytoplasmic. Residue C355 is the site of S-palmitoyl cysteine attachment.

The protein belongs to the G-protein coupled receptor 1 family. In terms of assembly, interacts with MAS1. Interacts with ARRB1. Interacts with FLNA (via filamin repeat 21); increases PKA-mediated phosphorylation of FLNA. In terms of processing, C-terminal Ser or Thr residues may be phosphorylated.

It localises to the cell membrane. Receptor for angiotensin II, a vasoconstricting peptide, which acts as a key regulator of blood pressure and sodium retention by the kidney. The activated receptor in turn couples to G-alpha proteins G(q) (GNAQ, GNA11, GNA14 or GNA15) and thus activates phospholipase C and increases the cytosolic Ca(2+) concentrations, which in turn triggers cellular responses such as stimulation of protein kinase C. The chain is Type-1 angiotensin II receptor (AGTR1) from Meriones unguiculatus (Mongolian jird).